A 353-amino-acid polypeptide reads, in one-letter code: Probable dual-specificity RNA methyltransferase RlmN (353 aa).

Catalysis depends on Glu-95, which acts as the Proton acceptor. Residues 103 to 333 enclose the Radical SAM core domain; sequence DGGRKTICIS…PILNRRSPGR (231 aa). A disulfide bridge connects residues Cys-110 and Cys-339. Positions 117, 121, and 124 each coordinate [4Fe-4S] cluster. S-adenosyl-L-methionine contacts are provided by residues 164–165, Ser-196, 219–221, and Asn-296; these read GE and SLN. Residue Cys-339 is the S-methylcysteine intermediate of the active site.

This sequence belongs to the radical SAM superfamily. RlmN family. The cofactor is [4Fe-4S] cluster.

It localises to the cytoplasm. It catalyses the reaction adenosine(2503) in 23S rRNA + 2 reduced [2Fe-2S]-[ferredoxin] + 2 S-adenosyl-L-methionine = 2-methyladenosine(2503) in 23S rRNA + 5'-deoxyadenosine + L-methionine + 2 oxidized [2Fe-2S]-[ferredoxin] + S-adenosyl-L-homocysteine. The catalysed reaction is adenosine(37) in tRNA + 2 reduced [2Fe-2S]-[ferredoxin] + 2 S-adenosyl-L-methionine = 2-methyladenosine(37) in tRNA + 5'-deoxyadenosine + L-methionine + 2 oxidized [2Fe-2S]-[ferredoxin] + S-adenosyl-L-homocysteine. Specifically methylates position 2 of adenine 2503 in 23S rRNA and position 2 of adenine 37 in tRNAs. This Leptospira biflexa serovar Patoc (strain Patoc 1 / Ames) protein is Probable dual-specificity RNA methyltransferase RlmN.